The chain runs to 279 residues: Arabinooligosaccharides transport system permease protein AraQ (279 aa).

The next 6 membrane-spanning stretches (helical) occupy residues Ile8–Leu28, Val79–Ala99, Phe110–Leu130, Val140–Phe160, Gly184–Leu204, and Ile245–Gln265. An ABC transmembrane type-1 domain is found at Phe75–Phe264.

It belongs to the binding-protein-dependent transport system permease family. MalFG subfamily. As to quaternary structure, the complex is composed of two ATP-binding proteins (MsmX), two transmembrane proteins (AraP and AraQ) and a solute-binding protein (AraN).

It is found in the cell membrane. Part of the ABC transporter complex AraNPQ involved in the uptake of arabinooligosaccharides. Responsible for the translocation of the substrate across the membrane. This Halalkalibacterium halodurans (strain ATCC BAA-125 / DSM 18197 / FERM 7344 / JCM 9153 / C-125) (Bacillus halodurans) protein is Arabinooligosaccharides transport system permease protein AraQ (araQ).